The chain runs to 459 residues: MLREYKTVREIVGPLMLVEKVEGVKYNELVEIETGTGEIRRGQVLEVNGDKALVQLFEGSTGLNINDCKVRFVGKSIELGVSIDMLGRVFDGLGRPRDKGPMIIPEKRLDINGNPINPTARDYPSEFIQTGISAIDGLNTLVRGQKLPIFSGSGLPHAQLAAQIARQAKVLGSDSKFAVVFAAMGITFEEADYFISDFRRTGAIDRSVLFINLANDPAIERIATPRMALTCAEFLAYEKEMHVLVIMTDMTNYCEALREVSAARKEVPGRRGYPGYLYTDLATIYERAGRIKGRKGSITQIPILTMPEDDKTHPIPDLTGYITEGQIILSRDLYRKGIYPPIDVLPSLSRLKDKGIGQGKTREDHADLMNQLFASYARGKQAKELAVILGEAALSDTDKLYAKFADEFEARYVAQREDEDRSIEETLAIGWDLLTILPRAELKRVRDEYIDKYLPEKGE.

It belongs to the ATPase alpha/beta chains family.

Its function is as follows. Produces ATP from ADP in the presence of a proton gradient across the membrane. The V-type beta chain is a regulatory subunit. This is V-type ATP synthase beta chain from Thermoanaerobacter pseudethanolicus (strain ATCC 33223 / 39E) (Clostridium thermohydrosulfuricum).